The sequence spans 111 residues: uncharacterized protein (111 aa).

The next 2 membrane-spanning stretches (helical) occupy residues 18 to 38 (LNVF…LFVS) and 42 to 62 (LALA…RTFP).

It is found in the membrane. This is an uncharacterized protein from Saccharomyces cerevisiae (strain ATCC 204508 / S288c) (Baker's yeast).